The chain runs to 447 residues: ATP synthase subunit beta (447 aa).

ATP is bound at residue 147 to 154; that stretch reads GGAGVGKT.

Belongs to the ATPase alpha/beta chains family. As to quaternary structure, F-type ATPases have 2 components, CF(1) - the catalytic core - and CF(0) - the membrane proton channel. CF(1) has five subunits: alpha(3), beta(3), gamma(1), delta(1), epsilon(1). CF(0) has three main subunits: a(1), b(2) and c(9-12). The alpha and beta chains form an alternating ring which encloses part of the gamma chain. CF(1) is attached to CF(0) by a central stalk formed by the gamma and epsilon chains, while a peripheral stalk is formed by the delta and b chains.

It localises to the cell membrane. The enzyme catalyses ATP + H2O + 4 H(+)(in) = ADP + phosphate + 5 H(+)(out). Functionally, produces ATP from ADP in the presence of a proton gradient across the membrane. The catalytic sites are hosted primarily by the beta subunits. The chain is ATP synthase subunit beta from Carsonella ruddii (strain PV).